The primary structure comprises 222 residues: Large ribosomal subunit protein uL4 (222 aa).

It belongs to the universal ribosomal protein uL4 family. In terms of assembly, part of the 50S ribosomal subunit.

Its function is as follows. One of the primary rRNA binding proteins, this protein initially binds near the 5'-end of the 23S rRNA. It is important during the early stages of 50S assembly. It makes multiple contacts with different domains of the 23S rRNA in the assembled 50S subunit and ribosome. In terms of biological role, forms part of the polypeptide exit tunnel. This Acidobacterium capsulatum (strain ATCC 51196 / DSM 11244 / BCRC 80197 / JCM 7670 / NBRC 15755 / NCIMB 13165 / 161) protein is Large ribosomal subunit protein uL4.